A 95-amino-acid chain; its full sequence is Aspartyl/glutamyl-tRNA(Asn/Gln) amidotransferase subunit C (95 aa).

It belongs to the GatC family. As to quaternary structure, heterotrimer of A, B and C subunits.

It catalyses the reaction L-glutamyl-tRNA(Gln) + L-glutamine + ATP + H2O = L-glutaminyl-tRNA(Gln) + L-glutamate + ADP + phosphate + H(+). The enzyme catalyses L-aspartyl-tRNA(Asn) + L-glutamine + ATP + H2O = L-asparaginyl-tRNA(Asn) + L-glutamate + ADP + phosphate + 2 H(+). Functionally, allows the formation of correctly charged Asn-tRNA(Asn) or Gln-tRNA(Gln) through the transamidation of misacylated Asp-tRNA(Asn) or Glu-tRNA(Gln) in organisms which lack either or both of asparaginyl-tRNA or glutaminyl-tRNA synthetases. The reaction takes place in the presence of glutamine and ATP through an activated phospho-Asp-tRNA(Asn) or phospho-Glu-tRNA(Gln). The sequence is that of Aspartyl/glutamyl-tRNA(Asn/Gln) amidotransferase subunit C from Prosthecochloris aestuarii (strain DSM 271 / SK 413).